The primary structure comprises 297 residues: 4-hydroxy-tetrahydrodipicolinate synthase (297 aa).

Thr-50 lines the pyruvate pocket. The active-site Proton donor/acceptor is the Tyr-138. The active-site Schiff-base intermediate with substrate is Lys-166. Ile-208 is a pyruvate binding site.

Belongs to the DapA family. Homotetramer; dimer of dimers.

It localises to the cytoplasm. The enzyme catalyses L-aspartate 4-semialdehyde + pyruvate = (2S,4S)-4-hydroxy-2,3,4,5-tetrahydrodipicolinate + H2O + H(+). Its pathway is amino-acid biosynthesis; L-lysine biosynthesis via DAP pathway; (S)-tetrahydrodipicolinate from L-aspartate: step 3/4. Catalyzes the condensation of (S)-aspartate-beta-semialdehyde [(S)-ASA] and pyruvate to 4-hydroxy-tetrahydrodipicolinate (HTPA). In Desulfotalea psychrophila (strain LSv54 / DSM 12343), this protein is 4-hydroxy-tetrahydrodipicolinate synthase.